The sequence spans 96 residues: Co-chaperonin GroES (96 aa).

Belongs to the GroES chaperonin family. In terms of assembly, heptamer of 7 subunits arranged in a ring. Interacts with the chaperonin GroEL.

The protein resides in the cytoplasm. Its function is as follows. Together with the chaperonin GroEL, plays an essential role in assisting protein folding. The GroEL-GroES system forms a nano-cage that allows encapsulation of the non-native substrate proteins and provides a physical environment optimized to promote and accelerate protein folding. GroES binds to the apical surface of the GroEL ring, thereby capping the opening of the GroEL channel. The polypeptide is Co-chaperonin GroES (Hydrogenobaculum sp. (strain Y04AAS1)).